Consider the following 818-residue polypeptide: Catenin beta (818 aa).

2 stretches are compositionally biased toward polar residues: residues Met-1 to Gly-21 and Gly-48 to Ser-66. Disordered stretches follow at residues Met-1 to Met-24 and Gly-48 to Asp-71. ARM repeat units follow at residues Asn-164 to Lys-203, Arg-248 to Leu-287, Asp-412 to Cys-451, Gln-454 to Ser-495, Glu-501 to Leu-541, Pro-543 to Ala-582, and Lys-648 to Glu-687. The interval Gln-732–Leu-818 is disordered.

This sequence belongs to the beta-catenin family.

The protein localises to the cytoplasm. Its subcellular location is the cytoskeleton. In terms of biological role, binds to the cytoplasmic domain of the cell-cell adhesion molecule E-cadherin, and perhaps to other (membrane) proteins. The association of catenins to cadherins produces a complex which is linked to the actin filament network, and which seems to be of primary importance for cadherins cell-adhesion properties. In Urechis caupo (Innkeeper worm), this protein is Catenin beta.